We begin with the raw amino-acid sequence, 565 residues long: Cytokinin dehydrogenase 2 (565 aa).

Residues 1–20 (MKQEQVRMAVLLMLNCFVKA) form the signal peptide. A glycan (N-linked (GlcNAc...) asparagine) is linked at Asn64. The region spanning 74 to 255 (RLAAAAAVLY…TRARIPLAPA (182 aa)) is the FAD-binding PCMH-type domain. Ala108, Gly110, and Gly112 together coordinate FAD. Pros-8alpha-FAD histidine is present on His113. FAD is bound by residues Ser114, Gln118, Asp179, Thr184, Ser190, Ile194, and Ile245. Asn464 carries N-linked (GlcNAc...) asparagine glycosylation. FAD-binding residues include Tyr517, Ser554, and Gln557.

Belongs to the oxygen-dependent FAD-linked oxidoreductase family. As to quaternary structure, monomer. Requires FAD as cofactor. Glycosylated. As to expression, mostly expressed in leaves, culms, inflorescence meristems, and flowers, especially in vascular tissues.

It localises to the secreted. Its subcellular location is the extracellular space. The catalysed reaction is N(6)-dimethylallyladenine + A + H2O = 3-methyl-2-butenal + adenine + AH2. Catalyzes the oxidation of cytokinins, a family of N(6)-substituted adenine derivatives that are plant hormones, where the substituent is an isopentenyl group. Is a major QTL involved in grain yield. Modulates the number of reproductive organs by regulating the cytokinin accumulation in inflorescence meristems. Acts as negative regulator of panicle branching. In Oryza sativa subsp. japonica (Rice), this protein is Cytokinin dehydrogenase 2.